A 143-amino-acid polypeptide reads, in one-letter code: Putative pre-16S rRNA nuclease (143 aa).

Belongs to the YqgF nuclease family.

It localises to the cytoplasm. Functionally, could be a nuclease involved in processing of the 5'-end of pre-16S rRNA. In Lactococcus lactis subsp. cremoris (strain MG1363), this protein is Putative pre-16S rRNA nuclease.